The sequence spans 263 residues: MARGPKKHLKRVAAPKHWMLDKLTSVFAPRPSTGPHKLRECLPLIIFLRNKLKYALTGDEVKKICMQRFIKIDGKVRADITYPAGFMDVISIDKTGENFRLIYDTKGRFAVHRITPEEAKYKLCKVRKIFVGTKGIPHLVTHDARTIRYPDPLIKMNDTIQIDLETGKITDFIKFDTGNLCMVTGGANLGRIGVITNRERHPGSFDVVHVKDANGNSFATRLSNIFVIGKGNKPWISLPRGKGIRLTIAEERDKRLAAKQSSG.

An S4 RNA-binding domain is found at 42–104 (LPLIIFLRNK…TGENFRLIYD (63 aa)). A Glycyl lysine isopeptide (Lys-Gly) (interchain with G-Cter in SUMO2) cross-link involves residue Lys230. Lys233 carries the post-translational modification N6-acetyllysine.

It belongs to the eukaryotic ribosomal protein eS4 family. As to quaternary structure, component of the small ribosomal subunit. Part of the small subunit (SSU) processome, composed of more than 70 proteins and the RNA chaperone small nucleolar RNA (snoRNA) U3. Identified in a IGF2BP1-dependent mRNP granule complex containing untranslated mRNAs.

It localises to the cytoplasm. It is found in the nucleus. Its subcellular location is the nucleolus. Component of the small ribosomal subunit. The ribosome is a large ribonucleoprotein complex responsible for the synthesis of proteins in the cell. Part of the small subunit (SSU) processome, first precursor of the small eukaryotic ribosomal subunit. During the assembly of the SSU processome in the nucleolus, many ribosome biogenesis factors, an RNA chaperone and ribosomal proteins associate with the nascent pre-rRNA and work in concert to generate RNA folding, modifications, rearrangements and cleavage as well as targeted degradation of pre-ribosomal RNA by the RNA exosome. This chain is Small ribosomal subunit protein eS4 (RPS4X), found in Oryctolagus cuniculus (Rabbit).